The chain runs to 715 residues: Transcription activator of gluconeogenesis MGYG_02011 (715 aa).

The segment covering 1-14 (MSPHQTTGQESDNM) has biased composition (polar residues). Residues 1–28 (MSPHQTTGQESDNMAVNGENAPASSQYI) form a disordered region. Positions 66–94 (CYACQRGHLTCGDERPCQRCIKRGFQDAC) form a DNA-binding region, zn(2)-C6 fungal-type. 4 stretches are compositionally biased toward polar residues: residues 129–166 (QNNVNGSNTSPGVPQQMTSPNFYSTQQSPDYNSFPQNK), 179–191 (YASQSPVSPTYQI), 203–223 (SLPQSASETPSTANAAPGQFN), and 362–385 (MMTTNSATFEDTTNSGAFSSRPNA). Disordered regions lie at residues 129-223 (QNNV…GQFN), 354-414 (SPAS…RRRH), 534-569 (NHNVNTGGSSGLVTDSTSRGSYTPRPYSSDVYNSST), and 628-663 (GSNGEADAGQNGEASSSEANELNGSNANGATTNGRG). Residues 386 to 400 (SVSQQRQQPVVSTPQ) show a composition bias toward low complexity. 2 stretches are compositionally biased toward polar residues: residues 535–554 (HNVNTGGSSGLVTDSTSRGS) and 639–649 (GEASSSEANEL). Residues 650–662 (NGSNANGATTNGR) are compositionally biased toward low complexity.

The protein belongs to the ERT1/acuK family.

Its subcellular location is the nucleus. Functionally, transcription factor which regulates nonfermentable carbon utilization. Activator of gluconeogenetic genes. In Arthroderma gypseum (strain ATCC MYA-4604 / CBS 118893) (Microsporum gypseum), this protein is Transcription activator of gluconeogenesis MGYG_02011.